Here is a 73-residue protein sequence, read N- to C-terminus: Large ribosomal subunit protein eL20 (73 aa).

This sequence belongs to the eukaryotic ribosomal protein eL20 family. Part of the 50S ribosomal subunit. Binds 23S rRNA.

This Methanococcus aeolicus (strain ATCC BAA-1280 / DSM 17508 / OCM 812 / Nankai-3) protein is Large ribosomal subunit protein eL20.